Consider the following 376-residue polypeptide: Queuine tRNA-ribosyltransferase (376 aa).

The Proton acceptor role is filled by D89. Substrate is bound by residues 89–93 (DSGGF), D143, Q194, and G221. Residues 252 to 258 (GVGIPSN) form an RNA binding region. D271 (nucleophile) is an active-site residue. The interval 276-280 (ARNGR) is RNA binding; important for wobble base 34 recognition. 4 residues coordinate Zn(2+): C309, C311, C314, and H340.

Belongs to the queuine tRNA-ribosyltransferase family. As to quaternary structure, homodimer. Within each dimer, one monomer is responsible for RNA recognition and catalysis, while the other monomer binds to the replacement base PreQ1. Zn(2+) is required as a cofactor.

The enzyme catalyses 7-aminomethyl-7-carbaguanine + guanosine(34) in tRNA = 7-aminomethyl-7-carbaguanosine(34) in tRNA + guanine. Its pathway is tRNA modification; tRNA-queuosine biosynthesis. Functionally, catalyzes the base-exchange of a guanine (G) residue with the queuine precursor 7-aminomethyl-7-deazaguanine (PreQ1) at position 34 (anticodon wobble position) in tRNAs with GU(N) anticodons (tRNA-Asp, -Asn, -His and -Tyr). Catalysis occurs through a double-displacement mechanism. The nucleophile active site attacks the C1' of nucleotide 34 to detach the guanine base from the RNA, forming a covalent enzyme-RNA intermediate. The proton acceptor active site deprotonates the incoming PreQ1, allowing a nucleophilic attack on the C1' of the ribose to form the product. After dissociation, two additional enzymatic reactions on the tRNA convert PreQ1 to queuine (Q), resulting in the hypermodified nucleoside queuosine (7-(((4,5-cis-dihydroxy-2-cyclopenten-1-yl)amino)methyl)-7-deazaguanosine). The protein is Queuine tRNA-ribosyltransferase of Clostridium botulinum (strain Kyoto / Type A2).